Reading from the N-terminus, the 692-residue chain is MAREFSLEKTRNIGIMAHVDAGKTTTTERILYYTGKIHKIGETHEGASQMDWMEQEQERGITITSAATTAQWDGHRVNIIDTPGHVDFTIEVQRSLRVLDGAVTVLDAQSGVEPQTETVWRQATEYGVPRIVFANKMDKIGADFLYSVQSLHDRLQANAHPIQLPIGSEDDFRGIIDLIKMKAEIYTNDLGTDILEEDIPAEYVDQANEYREKLVEAVADTDEDLMMKYLEGEEITNEELMAAIRKATINVEFYPVLCGSAFKNKGVQLMLDAVIDYLPSPLDIPAIKGINPDTDEEETRPASDEEPFAALAFKIMTDPFVGRLTFFRVYSGVLNSGSYVLNTSKGKRERIGRILQMHANSRQEIETVYAGDIAAAVGLKDTTTGDSLTDEKSKVILESIEVPEPVIQLMVEPKSKADQDKMGIALQKLAEEDPTFRVETNVETGETVISGMGELHLDVLVDRMKREFKVEANVGAPQVSYRETFRASTQARGFFKRQSGGKGQFGDVWIEFTPNEEGKGFEFENAIVGGVVPREFIPAVEKGLVESMANGVLAGYPMVDVKAKLYDGSYHDVDSSETAFKIAASLALKEAAKSAQPAILEPMMLVTITAPEDNLGDVMGHVTARRGRVDGMEARGNTQVVRAFVPLAEMFGYATVLRSATQGRGTFMMVFDHYEDVPKSVQEEIIKKNSGE.

A tr-type G domain is found at 8-282 (EKTRNIGIMA…AVIDYLPSPL (275 aa)). GTP-binding positions include 17–24 (AHVDAGKT), 81–85 (DTPGH), and 135–138 (NKMD).

The protein belongs to the TRAFAC class translation factor GTPase superfamily. Classic translation factor GTPase family. EF-G/EF-2 subfamily.

Its subcellular location is the cytoplasm. In terms of biological role, catalyzes the GTP-dependent ribosomal translocation step during translation elongation. During this step, the ribosome changes from the pre-translocational (PRE) to the post-translocational (POST) state as the newly formed A-site-bound peptidyl-tRNA and P-site-bound deacylated tRNA move to the P and E sites, respectively. Catalyzes the coordinated movement of the two tRNA molecules, the mRNA and conformational changes in the ribosome. This is Elongation factor G from Streptococcus agalactiae serotype Ia (strain ATCC 27591 / A909 / CDC SS700).